Reading from the N-terminus, the 29-residue chain is Cyclotide vibi-D (29 aa).

The cyclopeptide (Gly-Asn) cross-link spans 1 to 29; it reads GLPVCGETCFGGRCNTPGCTCSYPICTRN. 3 disulfides stabilise this stretch: C5–C19, C9–C21, and C14–C26.

This is a cyclic peptide.

Its function is as follows. Probably participates in a plant defense mechanism. Has moderate levels of cytotoxic activity, active against a human lymphoma cell line with an IC(50) of &gt;30 uM. The chain is Cyclotide vibi-D from Viola biflora (Yellow wood violet).